A 74-amino-acid chain; its full sequence is Putative defensin-like protein 27 (74 aa).

The signal sequence occupies residues 1 to 19; sequence MVHPRFVFFAFLALSVLLA. Intrachain disulfides connect Cys36–Cys74, Cys46–Cys65, Cys51–Cys70, and Cys55–Cys72.

The protein belongs to the DEFL family.

The protein resides in the secreted. The chain is Putative defensin-like protein 27 from Arabidopsis thaliana (Mouse-ear cress).